A 300-amino-acid polypeptide reads, in one-letter code: Large ribosomal subunit protein bL9m (300 aa).

The protein belongs to the bacterial ribosomal protein bL9 family. As to quaternary structure, component of the mitochondrial large ribosomal subunit (mt-LSU). Mature N.crassa 74S mitochondrial ribosomes consist of a small (37S) and a large (54S) subunit. The 37S small subunit contains a 16S ribosomal RNA (16S mt-rRNA) and 32 different proteins. The 54S large subunit contains a 23S rRNA (23S mt-rRNA) and 42 different proteins.

The protein resides in the mitochondrion. In terms of biological role, component of the mitochondrial ribosome (mitoribosome), a dedicated translation machinery responsible for the synthesis of mitochondrial genome-encoded proteins, including at least some of the essential transmembrane subunits of the mitochondrial respiratory chain. The mitoribosomes are attached to the mitochondrial inner membrane and translation products are cotranslationally integrated into the membrane. The sequence is that of Large ribosomal subunit protein bL9m (mrpl50) from Neurospora crassa (strain ATCC 24698 / 74-OR23-1A / CBS 708.71 / DSM 1257 / FGSC 987).